A 54-amino-acid chain; its full sequence is Photoreceptor disk component PRCD (54 aa).

A lipid anchor (S-palmitoyl cysteine) is attached at Cys-2. The tract at residues 24-54 is disordered; sequence QPEPNGVDGAVSGSSLETDLQSSGREKEPLK. Residues 35–46 are compositionally biased toward polar residues; sequence SGSSLETDLQSS.

Belongs to the PRCD family. Interacts with RHO/rhodopsin; the interaction promotes PRCD stability. Post-translationally, palmitoylated at Cys-2. Palmitoylation is essential for protein stability and trafficking to the photoreceptor outer segment, but does not appear to be essential for membrane localization. Probably palmitoylated by ZDHHC3. Phosphorylated. As to expression, expressed in retina (at protein level).

It is found in the cell projection. The protein localises to the cilium. Its subcellular location is the photoreceptor outer segment. It localises to the membrane. The protein resides in the endoplasmic reticulum. It is found in the golgi apparatus. In terms of biological role, involved in vision. The chain is Photoreceptor disk component PRCD from Bos taurus (Bovine).